A 609-amino-acid chain; its full sequence is Glutamine--fructose-6-phosphate aminotransferase [isomerizing] (609 aa).

The Nucleophile; for GATase activity role is filled by cysteine 2. The 217-residue stretch at 2 to 218 folds into the Glutamine amidotransferase type-2 domain; the sequence is CGIVGAVAQR…EGDVVEVTRR (217 aa). SIS domains are found at residues 286–426 and 458–599; these read ADAL…LKGA and LAEG…VDQP. The active-site For Fru-6P isomerization activity is lysine 604.

As to quaternary structure, homodimer.

The protein resides in the cytoplasm. The catalysed reaction is D-fructose 6-phosphate + L-glutamine = D-glucosamine 6-phosphate + L-glutamate. Catalyzes the first step in hexosamine metabolism, converting fructose-6P into glucosamine-6P using glutamine as a nitrogen source. The polypeptide is Glutamine--fructose-6-phosphate aminotransferase [isomerizing] (Yersinia pestis).